A 269-amino-acid polypeptide reads, in one-letter code: Voltage-gated hydrogen channel 1 (269 aa).

At 1 to 96 (MTSHDPKAVT…RLRKLFSSHR (96 aa)) the chain is on the cytoplasmic side. Thr-29 bears the Phosphothreonine mark. Positions 46-79 (ENEEEEEEPAPTSAEGEGNAEGPDAEAGSASTPR) are disordered. Position 93 is a phosphoserine (Ser-93). The helical transmembrane segment at 97–117 (FQVIIICLVVLDALLVLAELL) threads the bilayer. Topologically, residues 118–134 (LDLKIIEPDEQDYAVTA) are extracellular. A helical transmembrane segment spans residues 135–157 (FHYMSFAILVFFMLEIFFKIFVF). Residues 158-165 (RLEFFHHK) lie on the Cytoplasmic side of the membrane. Residues 166-186 (FEILDAFVVVVSFVLDLVLLF) traverse the membrane as a helical segment. Residues 187–193 (KSHHFEA) are Extracellular-facing. Residues 194 to 214 (LGLLILLRLWRVARIINGIII) form a helical membrane-spanning segment. The Cytoplasmic segment spans residues 215-269 (SVKTRSERQILRLKQINIQLATKIQHLEFSCSEKEQEIERLNKLLKQNGLLGDVN). Residues 221–261 (ERQILRLKQINIQLATKIQHLEFSCSEKEQEIERLNKLLKQ) are a coiled coil.

This sequence belongs to the voltage-gated proton channel (VPC) (TC 1.A.51) family. As to quaternary structure, homodimer; each protomer forms its own proton conduction pathway. Phosphorylated in vitro by PRKCD. Phosphorylation may enhance channel gating. As to expression, enriched in immune tissues, such as bone marrow, macrophages and spleen.

The protein localises to the cell membrane. The protein resides in the apical cell membrane. It is found in the cytoplasmic vesicle. It localises to the phagosome membrane. Its subcellular location is the cell projection. The protein localises to the cilium. The protein resides in the flagellum membrane. It carries out the reaction H(+)(in) = H(+)(out). The dimers display cooperative channel gating. The channel activity is inhibited by zinc ions. Voltage-gated proton-selective channel that conducts outward proton currents in response to intracellular acidification. Lacks a canonical ion-channel pore domain and mediates proton permeability via its voltage sensor domain. Provides for proton efflux that compensates for electron charge generated by NADPH oxidase activity either in the extracellular or phagosomal compartments, thus enabling the production of high levels of bactericidal reactive oxygen species during the respiratory burst. Opens when the pH of airway surface liquid exceeds 7 and contributes to respiratory epithelial acid secretion to maintain pH in the mucosa. The chain is Voltage-gated hydrogen channel 1 from Mus musculus (Mouse).